The following is a 291-amino-acid chain: 3-methylcatechol 2,3-dioxygenase (291 aa).

2 VOC domains span residues 5 to 119 (RLGY…IYYG) and 143 to 264 (GLGH…YGWG). 3 residues coordinate Fe cation: His-146, His-210, and Glu-260.

It belongs to the extradiol ring-cleavage dioxygenase family. Homooctamer. The cofactor is Fe(2+).

It catalyses the reaction 3-methylcatechol + O2 = 2-hydroxy-6-oxo-2,4-heptadienoate + H(+). It functions in the pathway xenobiotic degradation; toluene degradation. This is 3-methylcatechol 2,3-dioxygenase (todE) from Pseudomonas putida (strain ATCC 700007 / DSM 6899 / JCM 31910 / BCRC 17059 / LMG 24140 / F1).